We begin with the raw amino-acid sequence, 225 residues long: Rho GDP-dissociation inhibitor 3 (225 aa).

It belongs to the Rho GDI family. In terms of tissue distribution, detected only in brain, lung, kidney and testis.

The protein resides in the cytoplasm. Functionally, inhibits GDP/GTP exchange reaction of RhoB. Interacts specifically with the GDP- and GTP-bound forms of post-translationally processed Rhob and Rhog proteins, both of which show a growth-regulated expression in mammalian cells. Stimulates the release of the GDP-bound but not the GTP-bound RhoB protein. Also inhibits the GDP/GTP exchange of RhoB but shows less ability to inhibit the dissociation of prebound GTP. This Mus musculus (Mouse) protein is Rho GDP-dissociation inhibitor 3 (Arhgdig).